We begin with the raw amino-acid sequence, 7785 residues long: Probable non-canonical nonribosomal peptide synthetase (NRPS) CymA (7785 aa).

Carrier domains are found at residues 487–562 (TARS…QRQE), 1908–1983 (HART…SEQQ), and 2958–3033 (SPGM…LEGG). O-(pantetheine 4'-phosphoryl)serine is present on residues Ser522, Ser1943, and Ser2993. The LRR 1 repeat unit spans residues 3088 to 3111 (RLALADVVVRHEALRTVFAERAGN). Carrier domains follow at residues 3978-4053 (APRT…SEQQ), 5002-5077 (EPRT…LEAN), and 6389-6464 (GPRD…AQGS). Ser4013, Ser5037, and Ser6424 each carry O-(pantetheine 4'-phosphoryl)serine. An LRR 2 repeat occupies 6853–6875 (TGVSRVDLSVNAIETFDDHGLPA). The region spanning 7432 to 7507 (GPRTPQEEIL…QLAEQLGSDG (76 aa)) is the Carrier 7 domain. Ser7467 bears the O-(pantetheine 4'-phosphoryl)serine mark.

The cofactor is pantetheine 4'-phosphate.

Probable non-canonical nonribosomal peptide synthetase (NRPS); part of the gene cluster that mediates the biosynthesis of cyclic heptapeptides, known as cyclomarins and also of cyclic dipeptides, called cyclomarazines, which have both antimicrobial and cytotoxic effects. First, CymD catalyzes the reverse N-prenylation of monomeric L-tryptophan with dimethylallyl diphosphate (DMAPP) to form N-(1,1-dimethylallyl)-tryptophan (r-N-DMAT). The N-(1,1-dimethylallyl)-tryptophan produced by CymD is then combined with a range of standard and nonproteinogenic amino acid substrates to synthesize the peptides, a process that is probably catalyzed by the non-canonical nonribosomal peptide synthetase (NRPS), CymA. Other proteins in the cluster catalyze further modifications of the peptides including CymV which catalyzes the oxidation of olefinic cyclomarins and cyclomarazines to their respective epoxide derivatives. The chain is Probable non-canonical nonribosomal peptide synthetase (NRPS) CymA from Salinispora arenicola (strain CNS-205).